A 201-amino-acid chain; its full sequence is 3-isopropylmalate dehydratase small subunit (201 aa).

It belongs to the LeuD family. LeuD type 1 subfamily. As to quaternary structure, heterodimer of LeuC and LeuD.

It carries out the reaction (2R,3S)-3-isopropylmalate = (2S)-2-isopropylmalate. The protein operates within amino-acid biosynthesis; L-leucine biosynthesis; L-leucine from 3-methyl-2-oxobutanoate: step 2/4. Its function is as follows. Catalyzes the isomerization between 2-isopropylmalate and 3-isopropylmalate, via the formation of 2-isopropylmaleate. This is 3-isopropylmalate dehydratase small subunit from Chloroflexus aurantiacus (strain ATCC 29366 / DSM 635 / J-10-fl).